The following is a 292-amino-acid chain: Golgi to ER traffic protein 2 (292 aa).

Basic and acidic residues predominate over residues 1–18 (MSELSAEEKRKLLRERRQ). A disordered region spans residues 1-80 (MSELSAEEKR…TPLHDDPEVP (80 aa)). The Cytoplasmic segment spans residues 1–158 (MSELSAEEKR…SQYHAYEQKQ (158 aa)). Composition is skewed to polar residues over residues 29–47 (RLNNILSQGSSVKSSNVTS) and 55–71 (ATTTVMDLPSRETQSPT). Residues 159 to 179 (WKARFLVVRWIIHTLNFVYHY) traverse the membrane as a helical segment. The Lumenal segment spans residues 180–205 (IASGYKLSASPYAFVRAQAVDSHVRT). The helical transmembrane segment at 206-225 (FFTAFLTVEVAVISAYFLVM) threads the bilayer. The Cytoplasmic portion of the chain corresponds to 226-268 (SQPKFKDFSRENLVSRILSMASAVVPAVGRYQPLVTRALVYWN). The chain crosses the membrane as a helical span at residues 269–289 (GASIFVGDLMLMVFYFGITSV). At 290–292 (LGN) the chain is on the lumenal side.

This sequence belongs to the GET2 family. Component of the Golgi to ER traffic (GET) complex, which is composed of GET1, GET2 and GET3. Within the complex, GET1 and GET2 form a heterotetramer which is stabilized by phosphatidylinositol binding and which binds to the GET3 homodimer.

It localises to the endoplasmic reticulum membrane. Its subcellular location is the golgi apparatus membrane. Required for the post-translational delivery of tail-anchored (TA) proteins to the endoplasmic reticulum. Together with GET1, acts as a membrane receptor for soluble GET3, which recognizes and selectively binds the transmembrane domain of TA proteins in the cytosol. The GET complex cooperates with the HDEL receptor ERD2 to mediate the ATP-dependent retrieval of resident ER proteins that contain a C-terminal H-D-E-L retention signal from the Golgi to the ER. The sequence is that of Golgi to ER traffic protein 2 from Clavispora lusitaniae (strain ATCC 42720) (Yeast).